Here is a 366-residue protein sequence, read N- to C-terminus: D-alanine--D-alanine ligase (366 aa).

One can recognise an ATP-grasp domain in the interval 144 to 347 (KRLLKDAGLK…YRELIENLIE (204 aa)). 174–229 (KEELGLPMFIKPANQGSSVGVHKVENEEQFYSAIKDAFQFDHKLLVEEAIVGREIE) lines the ATP pocket. Positions 301, 314, and 316 each coordinate Mg(2+).

This sequence belongs to the D-alanine--D-alanine ligase family. Mg(2+) serves as cofactor. Requires Mn(2+) as cofactor.

The protein localises to the cytoplasm. The catalysed reaction is 2 D-alanine + ATP = D-alanyl-D-alanine + ADP + phosphate + H(+). It participates in cell wall biogenesis; peptidoglycan biosynthesis. Its function is as follows. Cell wall formation. This is D-alanine--D-alanine ligase from Oceanobacillus iheyensis (strain DSM 14371 / CIP 107618 / JCM 11309 / KCTC 3954 / HTE831).